A 144-amino-acid polypeptide reads, in one-letter code: Sentan (144 aa).

Residues Met-1–Met-31 form a disordered region. Over residues Pro-18 to Ala-29 the composition is skewed to low complexity.

It belongs to the S-100 family.

It localises to the cell projection. The protein localises to the cilium. Functionally, may be a component of the linker structure that bridges the ciliary membrane and peripheral singlet microtubules. This is Sentan from Gallus gallus (Chicken).